We begin with the raw amino-acid sequence, 425 residues long: Enolase (425 aa).

Gln163 provides a ligand contact to (2R)-2-phosphoglycerate. Glu205 acts as the Proton donor in catalysis. Mg(2+) is bound by residues Asp242, Glu285, and Asp312. Lys337, Arg366, Ser367, and Lys388 together coordinate (2R)-2-phosphoglycerate. Lys337 (proton acceptor) is an active-site residue.

It belongs to the enolase family. Mg(2+) serves as cofactor.

It localises to the cytoplasm. It is found in the secreted. The protein resides in the cell surface. It carries out the reaction (2R)-2-phosphoglycerate = phosphoenolpyruvate + H2O. Its pathway is carbohydrate degradation; glycolysis; pyruvate from D-glyceraldehyde 3-phosphate: step 4/5. In terms of biological role, catalyzes the reversible conversion of 2-phosphoglycerate (2-PG) into phosphoenolpyruvate (PEP). It is essential for the degradation of carbohydrates via glycolysis. The chain is Enolase from Rhodospirillum rubrum (strain ATCC 11170 / ATH 1.1.1 / DSM 467 / LMG 4362 / NCIMB 8255 / S1).